The sequence spans 199 residues: uncharacterized protein (199 aa).

Residues 71–104 (RANATNKLTVIAEQIQHLQEQARKVLEDARRDAD) are a coiled coil.

This is an uncharacterized protein from Mus musculus (Mouse).